Consider the following 327-residue polypeptide: Phospho-N-acetylmuramoyl-pentapeptide-transferase (327 aa).

10 helical membrane passes run 3–23, 51–71, 75–95, 115–135, 140–160, 172–192, 197–217, 223–243, 248–268, and 306–326; these read IALI…PAFI, TMGG…IGLF, LSNG…VGFL, LFLQ…HGAG, IFTV…FWLI, IDGL…VIAV, FDIL…FVFN, IFMG…ISIS, WTLL…MMQV, and VDFF…AILY.

This sequence belongs to the glycosyltransferase 4 family. MraY subfamily. The cofactor is Mg(2+).

The protein localises to the cell membrane. It carries out the reaction UDP-N-acetyl-alpha-D-muramoyl-L-alanyl-gamma-D-glutamyl-L-lysyl-D-alanyl-D-alanine + di-trans,octa-cis-undecaprenyl phosphate = Mur2Ac(oyl-L-Ala-gamma-D-Glu-L-Lys-D-Ala-D-Ala)-di-trans,octa-cis-undecaprenyl diphosphate + UMP. It participates in cell wall biogenesis; peptidoglycan biosynthesis. Functionally, catalyzes the initial step of the lipid cycle reactions in the biosynthesis of the cell wall peptidoglycan: transfers peptidoglycan precursor phospho-MurNAc-pentapeptide from UDP-MurNAc-pentapeptide onto the lipid carrier undecaprenyl phosphate, yielding undecaprenyl-pyrophosphoryl-MurNAc-pentapeptide, known as lipid I. The polypeptide is Phospho-N-acetylmuramoyl-pentapeptide-transferase (Streptococcus sanguinis (strain SK36)).